The sequence spans 123 residues: UPF0102 protein PputGB1_4524 (123 aa).

It belongs to the UPF0102 family.

The polypeptide is UPF0102 protein PputGB1_4524 (Pseudomonas putida (strain GB-1)).